A 66-amino-acid chain; its full sequence is Hemicalcin (66 aa).

Residues 1 to 21 (MRASLFIVIFVVSFITISCLS) form the signal peptide. Residues 22-33 (TDDEEARWIEKR) constitute a propeptide that is removed on maturation. 3 cysteine pairs are disulfide-bonded: Cys-36-Cys-50, Cys-43-Cys-54, and Cys-49-Cys-65. Positions 55–57 (KRR) are essential for stimulation of [3H]ryanodine binding to RYR1.

It belongs to the scorpion calcin family. Expressed by the venom gland.

Its subcellular location is the secreted. Functionally, this toxin stabilizes ryanodine receptor 1 (RyR1) opening in a long-lasting subconductance state (20% and 38% of the full conductance state have been found). It promotes an increase in the opening probability at intermediate concentration. Furthermore, it triggers calcium release from sarcoplasmic vesicles (68 nM are enough to induce a sharp release, and 45% of the total calcium is released after toxin (100 nM) addition) probably by acting as a cell-penetrating peptide (CPP). In addition, it has been shown to dose-dependently stimulate ryanodine binding to RyR1 (EC(50)=6.9-71 nM). It also augments the bell-shaped calcium-[3H]ryanodine binding curve that is maximal at about 10 uM calcium concentration. It binds a different site as ryanodine. It acts synergistically with caffeine. In vivo, intracerebroventricular injection into mice induces neurotoxic symptoms, followed by death. This chain is Hemicalcin, found in Hemiscorpius lepturus (Scorpion).